Here is a 362-residue protein sequence, read N- to C-terminus: Putative transport protein BB_0006 (362 aa).

8 helical membrane-spanning segments follow: residues 20–40 (FYCI…EAVF), 43–63 (LAIS…LARF), 68–88 (FLIV…IFSF), 144–164 (EIIG…FLLS), 212–232 (ILVF…WAVL), 234–254 (FVFN…IVIT), 265–285 (IVLY…NILE), and 304–326 (LFFW…TVIV).

It belongs to the autoinducer-2 exporter (AI-2E) (TC 2.A.86) family.

Its subcellular location is the cell membrane. The polypeptide is Putative transport protein BB_0006 (Borreliella burgdorferi (strain ATCC 35210 / DSM 4680 / CIP 102532 / B31) (Borrelia burgdorferi)).